A 501-amino-acid chain; its full sequence is IQ domain-containing protein M (501 aa).

Residues 237 to 247 (ERQPIKPEPKS) show a composition bias toward basic and acidic residues. The disordered stretch occupies residues 237–262 (ERQPIKPEPKSQPRIKGTPNKTDKLD). The region spanning 290–319 (LIRMVTVMQAHVRGWLERKRLQRVMTKALD) is the IQ domain.

The chain is IQ domain-containing protein M from Homo sapiens (Human).